The sequence spans 106 residues: Iron-sulfur cluster assembly protein CyaY (106 aa).

The protein belongs to the frataxin family.

Functionally, involved in iron-sulfur (Fe-S) cluster assembly. May act as a regulator of Fe-S biogenesis. This Salmonella newport (strain SL254) protein is Iron-sulfur cluster assembly protein CyaY.